Consider the following 173-residue polypeptide: uncharacterized protein (173 aa).

In terms of domain architecture, MSP spans 16–133 (DLVLRPETIT…KHVLIRFPNK (118 aa)). Basic and acidic residues predominate over residues 141 to 163 (KKMEEDDMKQQKERNKLSNEKMG). Residues 141–173 (KKMEEDDMKQQKERNKLSNEKMGIRNQNMGEKK) are disordered.

This is an uncharacterized protein from Caenorhabditis elegans.